The sequence spans 461 residues: GTPase Der (461 aa).

2 EngA-type G domains span residues 9-171 (KTIA…DLNQ) and 200-371 (IQVG…ECFS). GTP-binding positions include 15–22 (GQPNVGKS), 62–66 (DTGGM), 123–126 (NKID), 206–213 (GRVNVGKS), 253–257 (DTAGI), and 317–320 (NKWD). In terms of domain architecture, KH-like spans 372–456 (KRIPTSLLNS…PLILNAKDKK (85 aa)).

This sequence belongs to the TRAFAC class TrmE-Era-EngA-EngB-Septin-like GTPase superfamily. EngA (Der) GTPase family. Associates with the 50S ribosomal subunit.

GTPase that plays an essential role in the late steps of ribosome biogenesis. This Helicobacter pylori (strain Shi470) protein is GTPase Der.